The following is a 378-amino-acid chain: tRNA-specific 2-thiouridylase MnmA (378 aa).

ATP contacts are provided by residues glycine 9–serine 16 and methionine 35. The interaction with target base in tRNA stretch occupies residues asparagine 94–aspartate 96. Cysteine 99 (nucleophile) is an active-site residue. Cysteine 99 and cysteine 195 are joined by a disulfide. An ATP-binding site is contributed by glycine 123. The tract at residues lysine 145–glutamine 147 is interaction with tRNA. Catalysis depends on cysteine 195, which acts as the Cysteine persulfide intermediate. The tract at residues arginine 307–tyrosine 308 is interaction with tRNA.

It belongs to the MnmA/TRMU family.

Its subcellular location is the cytoplasm. It catalyses the reaction S-sulfanyl-L-cysteinyl-[protein] + uridine(34) in tRNA + AH2 + ATP = 2-thiouridine(34) in tRNA + L-cysteinyl-[protein] + A + AMP + diphosphate + H(+). In terms of biological role, catalyzes the 2-thiolation of uridine at the wobble position (U34) of tRNA, leading to the formation of s(2)U34. The polypeptide is tRNA-specific 2-thiouridylase MnmA (Xanthomonas oryzae pv. oryzae (strain PXO99A)).